The primary structure comprises 394 residues: G2/mitotic-specific cyclin-B (394 aa).

The interval 360-394 (QSHPSPNSRLDQEEDMASSKFMSDQQATQELKSIR) is disordered. Polar residues predominate over residues 379–394 (KFMSDQQATQELKSIR).

The protein belongs to the cyclin family. Cyclin AB subfamily. As to quaternary structure, interacts with the CDK1 protein kinase to form a serine/threonine kinase holoenzyme complex also known as maturation promoting factor (MPF). The cyclin subunit imparts substrate specificity to the complex.

Essential for the control of the cell cycle at the G2/M (mitosis) transition. The chain is G2/mitotic-specific cyclin-B from Patiria pectinifera (Starfish).